The chain runs to 208 residues: Recombination protein RecR (208 aa).

The C4-type zinc finger occupies C60–C75. In terms of domain architecture, Toprim spans S83–S178.

This sequence belongs to the RecR family.

In terms of biological role, may play a role in DNA repair. It seems to be involved in an RecBC-independent recombinational process of DNA repair. It may act with RecF and RecO. The sequence is that of Recombination protein RecR from Parabacteroides distasonis (strain ATCC 8503 / DSM 20701 / CIP 104284 / JCM 5825 / NCTC 11152).